Reading from the N-terminus, the 294-residue chain is ATP synthase gamma chain (294 aa).

Belongs to the ATPase gamma chain family. As to quaternary structure, F-type ATPases have 2 components, CF(1) - the catalytic core - and CF(0) - the membrane proton channel. CF(1) has five subunits: alpha(3), beta(3), gamma(1), delta(1), epsilon(1). CF(0) has three main subunits: a, b and c.

Its subcellular location is the cell inner membrane. Its function is as follows. Produces ATP from ADP in the presence of a proton gradient across the membrane. The gamma chain is believed to be important in regulating ATPase activity and the flow of protons through the CF(0) complex. This is ATP synthase gamma chain from Rhizobium etli (strain CIAT 652).